The sequence spans 945 residues: Leucine--tRNA ligase 1 (945 aa).

Positions 42–52 (PYTNSPLHIGH) match the 'HIGH' region motif. Positions 625–629 (KMSKS) match the 'KMSKS' region motif. An ATP-binding site is contributed by K628.

The protein belongs to the class-I aminoacyl-tRNA synthetase family.

It localises to the cytoplasm. The enzyme catalyses tRNA(Leu) + L-leucine + ATP = L-leucyl-tRNA(Leu) + AMP + diphosphate. The chain is Leucine--tRNA ligase 1 from Sulfurisphaera tokodaii (strain DSM 16993 / JCM 10545 / NBRC 100140 / 7) (Sulfolobus tokodaii).